Consider the following 343-residue polypeptide: N-acetyl-gamma-glutamyl-phosphate reductase (343 aa).

C147 is a catalytic residue.

The protein belongs to the NAGSA dehydrogenase family. Type 1 subfamily.

It localises to the cytoplasm. The enzyme catalyses N-acetyl-L-glutamate 5-semialdehyde + phosphate + NADP(+) = N-acetyl-L-glutamyl 5-phosphate + NADPH + H(+). Its pathway is amino-acid biosynthesis; L-arginine biosynthesis; N(2)-acetyl-L-ornithine from L-glutamate: step 3/4. Functionally, catalyzes the NADPH-dependent reduction of N-acetyl-5-glutamyl phosphate to yield N-acetyl-L-glutamate 5-semialdehyde. This is N-acetyl-gamma-glutamyl-phosphate reductase from Listeria welshimeri serovar 6b (strain ATCC 35897 / DSM 20650 / CCUG 15529 / CIP 8149 / NCTC 11857 / SLCC 5334 / V8).